A 117-amino-acid polypeptide reads, in one-letter code: Ig lambda-1 chain V region (117 aa).

A signal peptide spans 1–20; that stretch reads MAWISLILSLLALSSGGAIS. Pyrrolidone carboxylic acid is present on Q21. The region spanning 21-117 is the Ig-like domain; sequence QAVVTQESAL…YFCALWYSNH (97 aa).

In Mus musculus (Mouse), this protein is Ig lambda-1 chain V region.